Reading from the N-terminus, the 155-residue chain is FUN14 domain-containing protein 1 (155 aa).

The Cytoplasmic portion of the chain corresponds to 1–47 (MATRNPPPQEYESDDDSYEVLDLTEYARRHHWWNRVFGHSSGPMVEK). 2 positions are modified to phosphoserine: S13 and S17. Phosphotyrosine; by SRC is present on Y18. The short motif at 18–21 (YEVL) is the YXXL element. A helical transmembrane segment spans residues 48-68 (YSVATQIVMGGVSGWCAGFLF). Topologically, residues 69–74 (QKVGKL) are mitochondrial intermembrane. A helical membrane pass occupies residues 75–95 (AATAVGGGFLLLQIASHSGYV). Over 96–133 (QIDWKRVEKDVNKAKRQIKKRANKAAPEINNIIEEATE) the chain is Cytoplasmic. A Glycyl lysine isopeptide (Lys-Gly) (interchain with G-Cter in ubiquitin) cross-link involves residue K119. A helical transmembrane segment spans residues 134 to 154 (FVKQNIVISSGFVGGFLLGLA). Residue S155 is a topological domain, mitochondrial intermembrane.

Belongs to the FUN14 family. As to quaternary structure, interacts (via YXXL motif) with MAP1 LC3 family proteins MAP1LC3A, MAP1LC3B and GABARAP. Interacts with DNM1L/DPR1. Interacts with GPX4. Phosphorylation at Ser-13 by CK2 and at Tyr-18 by SRC inhibits activation of mitophagy. Following hypoxia, dephosphorylated at Tyr-18, leading to interaction with MAP1 LC3 family proteins and triggering mitophagy. Dephosphorylation is mediated by PGAM5. Phosphorylated by ULK1 at Ser-17 which enhances FUNDC1 binding to LC3. Post-translationally, ubiquitinated on Lys-119. Deubiquitinated by USP19; leading to hypoxia-induced DRP1 oligomerization and GTPase activity.

It localises to the mitochondrion outer membrane. Integral mitochondrial outer-membrane protein that mediates the formation of mitochondria-associated endoplasmic reticulum membranes (MAMs). In turn, mediates angiogenesis and neoangiogenesis through interference with intracellular Ca(2+) communication and regulation of the vascular endothelial growth factor receptor KDR/VEGFR2 expression at both mRNA and protein levels. Also acts as an activator of hypoxia-induced mitophagy, an important mechanism for mitochondrial quality and homeostasis, by interacting with and recruiting LC3 protein family to mitochondria. Mechanistically, recruits DRP1 at ER-mitochondria contact sites leading to DRP1 oligomerization and GTPase activity to facilitate mitochondrial fission during hypoxia. Additionally, plays a role in hepatic ferroptosis by interacting directly with glutathione peroxidase/GPX4 to facilitate its recruitment into mitochondria through TOM/TIM complex where it is degraded by mitophagy. This is FUN14 domain-containing protein 1 (FUNDC1) from Bos taurus (Bovine).